Here is a 370-residue protein sequence, read N- to C-terminus: Cytochrome b (370 aa).

A run of 4 helical transmembrane segments spans residues 25 to 45, 69 to 90, 105 to 125, and 170 to 190; these read FGSM…FLAV, WMMQ…YIHI, WLSG…GYVL, and FFAL…LHIL. Residues H75 and H89 each contribute to the heme b site. Residues H174 and H188 each coordinate heme b. A ubiquinone is bound at residue H193. 4 helical membrane passes run 218–238, 280–300, 312–332, and 339–358; these read YKDM…VSFF, LGGA…PFTH, FMQL…WTAT, and FTTI…ISNP.

This sequence belongs to the cytochrome b family. The cytochrome bc1 complex contains 3 respiratory subunits (MT-CYB, CYC1 and UQCRFS1), 2 core proteins (UQCRC1 and UQCRC2) and probably 6 low-molecular weight proteins. Requires heme b as cofactor.

It localises to the mitochondrion inner membrane. Its function is as follows. Component of the ubiquinol-cytochrome c reductase complex (complex III or cytochrome b-c1 complex) that is part of the mitochondrial respiratory chain. The b-c1 complex mediates electron transfer from ubiquinol to cytochrome c. Contributes to the generation of a proton gradient across the mitochondrial membrane that is then used for ATP synthesis. This is Cytochrome b (MT-CYB) from Chilabothrus exsul (Abaco Island boa).